The sequence spans 122 residues: Basic phospholipase A2 Cdr-12 (122 aa).

Disulfide bonds link Cys26–Cys115, Cys28–Cys44, Cys43–Cys95, Cys49–Cys122, Cys50–Cys88, Cys57–Cys81, and Cys75–Cys86. Ca(2+)-binding residues include Tyr27, Gly29, and Gly31. The active site involves His47. Ca(2+) is bound at residue Asp48. Asp89 is an active-site residue.

Ca(2+) serves as cofactor. In terms of tissue distribution, expressed by the venom gland.

The protein resides in the secreted. It catalyses the reaction a 1,2-diacyl-sn-glycero-3-phosphocholine + H2O = a 1-acyl-sn-glycero-3-phosphocholine + a fatty acid + H(+). Its function is as follows. Snake venom phospholipase A2 (PLA2) that induces myonecrosis and edema upon intramuscular injections in mice. In vitro, causes a potent blockade of neuromuscular transmission in young chicken biventer cervicis preparation and produces cytotoxicity in murine C2C12 skeletal muscle myotubes and lack cytolytic activity upon myoblasts in vitro. PLA2 catalyzes the calcium-dependent hydrolysis of the 2-acyl groups in 3-sn-phosphoglycerides. In Crotalus durissus ruruima (South American rattlesnake), this protein is Basic phospholipase A2 Cdr-12.